The following is a 393-amino-acid chain: Arginine biosynthesis bifunctional protein ArgJ (393 aa).

6 residues coordinate substrate: threonine 142, lysine 168, threonine 179, glutamate 265, asparagine 388, and threonine 393. The active-site Nucleophile is threonine 179.

This sequence belongs to the ArgJ family. Heterotetramer of two alpha and two beta chains.

It is found in the cytoplasm. It catalyses the reaction N(2)-acetyl-L-ornithine + L-glutamate = N-acetyl-L-glutamate + L-ornithine. The catalysed reaction is L-glutamate + acetyl-CoA = N-acetyl-L-glutamate + CoA + H(+). The protein operates within amino-acid biosynthesis; L-arginine biosynthesis; L-ornithine and N-acetyl-L-glutamate from L-glutamate and N(2)-acetyl-L-ornithine (cyclic): step 1/1. It functions in the pathway amino-acid biosynthesis; L-arginine biosynthesis; N(2)-acetyl-L-ornithine from L-glutamate: step 1/4. Its function is as follows. Catalyzes two activities which are involved in the cyclic version of arginine biosynthesis: the synthesis of N-acetylglutamate from glutamate and acetyl-CoA as the acetyl donor, and of ornithine by transacetylation between N(2)-acetylornithine and glutamate. In Geobacter sulfurreducens (strain ATCC 51573 / DSM 12127 / PCA), this protein is Arginine biosynthesis bifunctional protein ArgJ.